A 1074-amino-acid polypeptide reads, in one-letter code: Semaphorin-5A (1074 aa).

Residues 1–22 form the signal peptide; the sequence is MKGACILAWLFSSLGVWRLARP. Residues 35–484 form the Sema domain; the sequence is HPVVSYKEIG…LQEHVVKIPL (450 aa). Disulfide bonds link C104/C114 and C131/C140. N147, N168, N227, and N277 each carry an N-linked (GlcNAc...) asparagine glycan. 2 cysteine pairs are disulfide-bonded: C254–C357 and C278–C320. N323 and N367 each carry an N-linked (GlcNAc...) asparagine glycan. The PSI domain maps to 486–533; sequence RCHFHQTRGACIGAQDPYCGWDAVMKKCTSLEESLSMTQWDQSVPTCP. N-linked (GlcNAc...) asparagine glycans are attached at residues N536 and N591. 3 consecutive TSP type-1 domains span residues 540–593, 595–651, and 653–702; these read DGSF…TNCS, NGGW…LLCP, and HVFW…NACP. Disulfide bonds link C607–C644, C611–C650, C622–C634, C665–C696, C669–C701, and C680–C686. N-linked (GlcNAc...) asparagine glycosylation occurs at N717. 3 TSP type-1 domains span residues 784–839, 841–896, and 897–944; these read NGAW…LPCP, DGVW…QTCP, and ENWS…VFDS. Disulfide bonds link C796-C833, C800-C838, C811-C823, C853-C890, C857-C895, and C868-C880. Residues N898 and N933 are each glycosylated (N-linked (GlcNAc...) asparagine). The chain crosses the membrane as a helical span at residues 969–989; it reads FHMMAVGLSSSILGCLLTLLV. N1015 carries N-linked (GlcNAc...) asparagine glycosylation.

As to quaternary structure, binds PLXNB3.

The protein localises to the membrane. In terms of biological role, bifunctional axonal guidance cue regulated by sulfated proteoglycans; attractive effects result from interactions with heparan sulfate proteoglycans (HSPGs), while the inhibitory effects depend on interactions with chondroitin sulfate proteoglycans (CSPGs). Ligand for receptor PLXNB3. In glioma cells, SEMA5A stimulation of PLXNB3 results in the disassembly of F-actin stress fibers, disruption of focal adhesions and cellular collapse as well as inhibition of cell migration and invasion through ARHGDIA-mediated inactivation of RAC1. May promote angiogenesis by increasing endothelial cell proliferation and migration and inhibiting apoptosis. This is Semaphorin-5A (Sema5a) from Rattus norvegicus (Rat).